Reading from the N-terminus, the 187-residue chain is Ubiquinone biosynthesis protein COQ4 homolog, mitochondrial (187 aa).

The Zn(2+) site is built by His-77, Asp-78, His-81, and Glu-93.

The protein belongs to the COQ4 family. As to quaternary structure, component of a multi-subunit COQ enzyme complex. Zn(2+) serves as cofactor.

It localises to the mitochondrion inner membrane. It carries out the reaction a 4-hydroxy-3-methoxy-5-(all-trans-polyprenyl)benzoate + H(+) = a 2-methoxy-6-(all-trans-polyprenyl)phenol + CO2. Its pathway is cofactor biosynthesis; ubiquinone biosynthesis. In terms of biological role, lyase that catalyzes the C1-decarboxylation of 4-hydroxy-3-methoxy-5-(all-trans-polyprenyl)benzoic acid into 2-methoxy-6-(all-trans-polyprenyl)phenol during ubiquinone biosynthesis. In Leishmania major, this protein is Ubiquinone biosynthesis protein COQ4 homolog, mitochondrial.